We begin with the raw amino-acid sequence, 224 residues long: 2-phospho-L-lactate guanylyltransferase (224 aa).

The protein belongs to the CofC family. As to quaternary structure, homodimer.

It carries out the reaction (2S)-2-phospholactate + GTP + H(+) = (2S)-lactyl-2-diphospho-5'-guanosine + diphosphate. It functions in the pathway cofactor biosynthesis; coenzyme F420 biosynthesis. Functionally, guanylyltransferase that catalyzes the activation of (2S)-2-phospholactate (2-PL) as (2S)-lactyl-2-diphospho-5'-guanosine, via the condensation of 2-PL with GTP. It is involved in the biosynthesis of coenzyme F420, a hydride carrier cofactor. In Methanobrevibacter smithii (strain ATCC 35061 / DSM 861 / OCM 144 / PS), this protein is 2-phospho-L-lactate guanylyltransferase.